Reading from the N-terminus, the 179-residue chain is Probable mitochondrial import inner membrane translocase subunit Tim17 1 (179 aa).

Transmembrane regions (helical) follow at residues Cys17 to Phe37, Leu61 to Val81, and Leu113 to Val133.

The protein belongs to the Tim17/Tim22/Tim23 family. In terms of assembly, component of the TIM23 complex at least composed of Tim23, Tim17 (Tim17a1, Tim17a2 or Tim17b1) and a Tim50. The complex interacts with the Tim44 component of the PAM complex.

Its subcellular location is the mitochondrion inner membrane. In terms of biological role, essential component of the TIM23 complex, a complex that mediates the translocation of transit peptide-containing proteins across the mitochondrial inner membrane. This Drosophila melanogaster (Fruit fly) protein is Probable mitochondrial import inner membrane translocase subunit Tim17 1 (Tim17b1).